A 627-amino-acid chain; its full sequence is (-)-alpha-pinene synthase 2, chloroplastic (627 aa).

The N-terminal 36 residues, M1 to L36, are a transit peptide targeting the chloroplast. 3 residues coordinate Mg(2+): D378, D382, and D530. The DDXXD motif motif lies at D378–D382.

The protein belongs to the terpene synthase family. Tpsd subfamily. It depends on Mg(2+) as a cofactor. The cofactor is Mn(2+).

It is found in the plastid. It localises to the chloroplast. The enzyme catalyses (2E)-geranyl diphosphate = (1S,5S)-beta-pinene + diphosphate. It carries out the reaction (2E)-geranyl diphosphate = (1S,5S)-alpha-pinene + diphosphate. It functions in the pathway terpene metabolism; oleoresin biosynthesis. Functionally, terpene synthase (TPS) involved in the biosynthesis of monoterpene natural products included in conifer oleoresin secretions and volatile emissions; these compounds contribute to biotic and abiotic stress defense against herbivores and pathogens. Catalyzes the conversion of (2E)-geranyl diphosphate (GPP) to (1S,5S)-beta-pinene. In Picea glauca (White spruce), this protein is (-)-alpha-pinene synthase 2, chloroplastic.